A 153-amino-acid chain; its full sequence is Probable succinate transporter subunit YjjB (153 aa).

Transmembrane regions (helical) follow at residues 7–27, 51–71, 83–103, and 125–145; these read WALL…AMVF, MIHF…MIGI, VFTV…TAMI, and FLKA…PGLW.

The protein belongs to the ThrE exporter (TC 2.A.79) family. As to quaternary structure, the transporter is composed of YjjB and YjjP.

Its subcellular location is the cell inner membrane. Involved in succinate export with YjjP. Both proteins are required for export. The polypeptide is Probable succinate transporter subunit YjjB (Yersinia pestis bv. Antiqua (strain Antiqua)).